The chain runs to 188 residues: Elongation factor P (188 aa).

Belongs to the elongation factor P family.

The protein localises to the cytoplasm. It participates in protein biosynthesis; polypeptide chain elongation. Functionally, involved in peptide bond synthesis. Stimulates efficient translation and peptide-bond synthesis on native or reconstituted 70S ribosomes in vitro. Probably functions indirectly by altering the affinity of the ribosome for aminoacyl-tRNA, thus increasing their reactivity as acceptors for peptidyl transferase. The protein is Elongation factor P of Mycoplasma mobile (strain ATCC 43663 / 163K / NCTC 11711) (Mesomycoplasma mobile).